The primary structure comprises 446 residues: Casein kinase I homolog 1 (446 aa).

The Protein kinase domain occupies 12-274 (YKVGRRIGEG…FDATPDYDYL (263 aa)). Residues 18–26 (IGEGSFGVI) and K41 contribute to the ATP site. The active-site Proton acceptor is the D131. The segment at 308–430 (KSRNAETENQ…ETEAPKKKKS (123 aa)) is disordered. Position 329 is a phosphoserine (S329). Residues 332-345 (PALQNHASTQNVVS) are compositionally biased toward polar residues. The span at 346–355 (KRSDYEKPFA) shows a compositional bias: basic and acidic residues. Residues 360–397 (NSASDSAEPNQNSLPNPPTETKATTTVPDRSGLATNQP) are compositionally biased toward polar residues. A compositionally biased stretch (basic and acidic residues) spans 401 to 412 (DVHDSSEERVTR).

This sequence belongs to the protein kinase superfamily. CK1 Ser/Thr protein kinase family. Casein kinase I subfamily.

The protein localises to the cytoplasm. The enzyme catalyses L-seryl-[protein] + ATP = O-phospho-L-seryl-[protein] + ADP + H(+). The catalysed reaction is L-threonyl-[protein] + ATP = O-phospho-L-threonyl-[protein] + ADP + H(+). In terms of biological role, casein kinases are operationally defined by their preferential utilization of acidic proteins such as caseins as substrates. The polypeptide is Casein kinase I homolog 1 (cki1) (Schizosaccharomyces pombe (strain 972 / ATCC 24843) (Fission yeast)).